A 223-amino-acid polypeptide reads, in one-letter code: Adenylate kinase 4, mitochondrial (223 aa).

Residue 15–20 participates in a ribonucleoside 5'-triphosphate binding; that stretch reads GSGKGT. The interval 35 to 64 is NMP; that stretch reads SSGHFLRENIKASTEVGEMAKQYIEKSLLV. Residues Ser-36 and Arg-41 each contribute to the AMP site. Lys-60 is modified (N6-succinyllysine). Residues 62–64, 89–92, and Gln-96 contribute to the AMP site; these read LLV and GFPR. The segment at 125–162 is LID; sequence RRWIHPPSGRVYNLDFNPPHVHGIDDVTGEPLVQQEDD. A ribonucleoside 5'-triphosphate contacts are provided by residues Arg-126 and 135-136; that span reads VY. Arg-170 provides a ligand contact to AMP. Lys-175 is subject to N6-acetyllysine. N6-acetyllysine; alternate is present on residues Lys-179 and Lys-186. 2 positions are modified to N6-succinyllysine; alternate: Lys-179 and Lys-186. Thr-199 lines the a ribonucleoside 5'-triphosphate pocket.

It belongs to the adenylate kinase family. AK3 subfamily. In terms of assembly, monomer. Interacts with SLC25A5/ANT2. Highly expressed in kidney, moderately expressed in heart and liver and weakly expressed in brain.

The protein resides in the mitochondrion matrix. The enzyme catalyses a ribonucleoside 5'-phosphate + ATP = a ribonucleoside 5'-diphosphate + ADP. It catalyses the reaction AMP + ATP = 2 ADP. It carries out the reaction GTP + AMP = GDP + ADP. The catalysed reaction is CMP + ATP = CDP + ADP. The enzyme catalyses GTP + CMP = CDP + GDP. It catalyses the reaction dAMP + ATP = dADP + ADP. It carries out the reaction dCMP + ATP = dCDP + ADP. The catalysed reaction is a 2'-deoxyribonucleoside 5'-diphosphate + ATP = a 2'-deoxyribonucleoside 5'-triphosphate + ADP. The enzyme catalyses a ribonucleoside 5'-diphosphate + ATP = a ribonucleoside 5'-triphosphate + ADP. It catalyses the reaction GDP + ATP = GTP + ADP. It carries out the reaction CDP + GTP = CTP + GDP. The catalysed reaction is CDP + ATP = CTP + ADP. The enzyme catalyses UDP + ATP = UTP + ADP. It catalyses the reaction GTP + UDP = UTP + GDP. It carries out the reaction dADP + GTP = dATP + GDP. The catalysed reaction is dCDP + GTP = dCTP + GDP. The enzyme catalyses dCDP + ATP = dCTP + ADP. It catalyses the reaction dGDP + ATP = dGTP + ADP. It carries out the reaction dTDP + GTP = dTTP + GDP. The catalysed reaction is dTDP + ATP = dTTP + ADP. Functionally, broad-specificity mitochondrial nucleoside phosphate kinase involved in cellular nucleotide homeostasis by catalyzing nucleoside-phosphate interconversions. Similar to other adenylate kinases, preferentially catalyzes the phosphorylation of the nucleoside monophosphate AMP with ATP as phosphate donor to produce ADP. Phosphorylates only AMP when using GTP as phosphate donor. In vitro, can also catalyze the phosphorylation of CMP, dAMP and dCMP and use GTP as an alternate phosphate donor. Moreover, exhibits a diphosphate kinase activity, producing ATP, CTP, GTP, UTP, TTP, dATP, dCTP and dGTP from the corresponding diphosphate substrates with either ATP or GTP as phosphate donors. Plays a role in controlling cellular ATP levels by regulating phosphorylation and activation of the energy sensor protein kinase AMPK. Plays a protective role in the cellular response to oxidative stress. This is Adenylate kinase 4, mitochondrial from Homo sapiens (Human).